We begin with the raw amino-acid sequence, 466 residues long: Cysteine--tRNA ligase (466 aa).

Position 33 (Cys33) interacts with Zn(2+). The short motif at 35–45 (PTVYDFAHIGN) is the 'HIGH' region element. Zn(2+) contacts are provided by Cys221, His246, and Glu250. The short motif at 279-283 (KMSKS) is the 'KMSKS' region element. An ATP-binding site is contributed by Lys282.

Belongs to the class-I aminoacyl-tRNA synthetase family. In terms of assembly, monomer. Requires Zn(2+) as cofactor.

Its subcellular location is the cytoplasm. It catalyses the reaction tRNA(Cys) + L-cysteine + ATP = L-cysteinyl-tRNA(Cys) + AMP + diphosphate. The sequence is that of Cysteine--tRNA ligase from Sinorhizobium medicae (strain WSM419) (Ensifer medicae).